The chain runs to 357 residues: RNA-binding protein 43 (357 aa).

The 90-residue stretch at 15-104 (RTVVVAGLPV…VSLRVSHFGD (90 aa)) folds into the RRM domain.

This is RNA-binding protein 43 (RBM43) from Homo sapiens (Human).